Reading from the N-terminus, the 169-residue chain is N5-carboxyaminoimidazole ribonucleotide mutase (169 aa).

The substrate site is built by Ser16, Asp19, and Arg46.

Belongs to the AIR carboxylase family. Class I subfamily.

It carries out the reaction 5-carboxyamino-1-(5-phospho-D-ribosyl)imidazole + H(+) = 5-amino-1-(5-phospho-D-ribosyl)imidazole-4-carboxylate. The protein operates within purine metabolism; IMP biosynthesis via de novo pathway; 5-amino-1-(5-phospho-D-ribosyl)imidazole-4-carboxylate from 5-amino-1-(5-phospho-D-ribosyl)imidazole (N5-CAIR route): step 2/2. Functionally, catalyzes the conversion of N5-carboxyaminoimidazole ribonucleotide (N5-CAIR) to 4-carboxy-5-aminoimidazole ribonucleotide (CAIR). The polypeptide is N5-carboxyaminoimidazole ribonucleotide mutase (Escherichia coli O157:H7).